A 369-amino-acid chain; its full sequence is Ferredoxin--NADP reductase, chloroplastic (369 aa).

The transit peptide at 1–55 (MTTAVTAAVSFPSTKTTSLSARSSSVISPDKISYKKVPLYYRNVSATGKMGPIRA) directs the protein to the chloroplast. One can recognise an FAD-binding FR-type domain in the interval 90-212 (KTPYVGRCLL…TGPVGKEMLM (123 aa)). FAD-binding positions include 148-151 (RLYS), 169-171 (CVK), Y175, 186-188 (VCS), and T227. Positions 151 and 171 each coordinate NADP(+). Residues T227, 259-260 (VP), 289-290 (SR), 299-301 (KMY), 328-329 (GL), and E367 contribute to the NADP(+) site.

It belongs to the ferredoxin--NADP reductase type 1 family. It depends on FAD as a cofactor.

It localises to the plastid. It is found in the chloroplast stroma. The protein resides in the chloroplast thylakoid membrane. The enzyme catalyses 2 reduced [2Fe-2S]-[ferredoxin] + NADP(+) + H(+) = 2 oxidized [2Fe-2S]-[ferredoxin] + NADPH. It functions in the pathway energy metabolism; photosynthesis. In terms of biological role, may play a key role in regulating the relative amounts of cyclic and non-cyclic electron flow to meet the demands of the plant for ATP and reducing power. In Spinacia oleracea (Spinach), this protein is Ferredoxin--NADP reductase, chloroplastic (PETH).